The primary structure comprises 146 residues: UPF0735 ACT domain-containing protein Cphy_3604 (146 aa).

Residues 70-145 (TFMLQMDDIP…GIHYLKILGR (76 aa)) enclose the ACT domain.

It belongs to the UPF0735 family.

This chain is UPF0735 ACT domain-containing protein Cphy_3604, found in Lachnoclostridium phytofermentans (strain ATCC 700394 / DSM 18823 / ISDg) (Clostridium phytofermentans).